Here is a 163-residue protein sequence, read N- to C-terminus: Mediator of RNA polymerase II transcription subunit 10 (163 aa).

The tract at residues 57–79 (AAPDPSYVQSPPSRTGLSPADPP) is disordered. The segment covering 63 to 72 (YVQSPPSRTG) has biased composition (polar residues).

Belongs to the Mediator complex subunit 10 family. Component of the Mediator complex.

It localises to the nucleus. Its function is as follows. Component of the Mediator complex, a coactivator involved in the regulated transcription of nearly all RNA polymerase II-dependent genes. Mediator functions as a bridge to convey information from gene-specific regulatory proteins to the basal RNA polymerase II transcription machinery. Mediator is recruited to promoters by direct interactions with regulatory proteins and serves as a scaffold for the assembly of a functional preinitiation complex with RNA polymerase II and the general transcription factors. This chain is Mediator of RNA polymerase II transcription subunit 10 (NUT2), found in Coccidioides immitis (strain RS) (Valley fever fungus).